Here is a 328-residue protein sequence, read N- to C-terminus: 4-hydroxythreonine-4-phosphate dehydrogenase (328 aa).

Substrate contacts are provided by His134 and Thr135. Residues His164, His209, and His265 each coordinate a divalent metal cation. Substrate contacts are provided by Lys273, Asn282, and Arg291.

It belongs to the PdxA family. As to quaternary structure, homodimer. Zn(2+) serves as cofactor. Requires Mg(2+) as cofactor. The cofactor is Co(2+).

Its subcellular location is the cytoplasm. It carries out the reaction 4-(phosphooxy)-L-threonine + NAD(+) = 3-amino-2-oxopropyl phosphate + CO2 + NADH. Its pathway is cofactor biosynthesis; pyridoxine 5'-phosphate biosynthesis; pyridoxine 5'-phosphate from D-erythrose 4-phosphate: step 4/5. Functionally, catalyzes the NAD(P)-dependent oxidation of 4-(phosphooxy)-L-threonine (HTP) into 2-amino-3-oxo-4-(phosphooxy)butyric acid which spontaneously decarboxylates to form 3-amino-2-oxopropyl phosphate (AHAP). In Vibrio vulnificus (strain YJ016), this protein is 4-hydroxythreonine-4-phosphate dehydrogenase.